A 799-amino-acid chain; its full sequence is Elongation factor G, mitochondrial (799 aa).

The N-terminal 33 residues, 1 to 33 (MRSPSLARLQTRAVFGLTRSARFQPQTLLRQRC), are a transit peptide targeting the mitochondrion. In terms of domain architecture, tr-type G spans 97-384 (DKCRNIGIAA…GVIDYLPNPA (288 aa)). Residues 106–113 (AHIDSGKT), 182–186 (DTPGH), and 236–239 (NKMD) contribute to the GTP site.

The protein belongs to the TRAFAC class translation factor GTPase superfamily. Classic translation factor GTPase family. EF-G/EF-2 subfamily.

It localises to the mitochondrion. It participates in protein biosynthesis; polypeptide chain elongation. Its function is as follows. Mitochondrial GTPase that catalyzes the GTP-dependent ribosomal translocation step during translation elongation. During this step, the ribosome changes from the pre-translocational (PRE) to the post-translocational (POST) state as the newly formed A-site-bound peptidyl-tRNA and P-site-bound deacylated tRNA move to the P and E sites, respectively. Catalyzes the coordinated movement of the two tRNA molecules, the mRNA and conformational changes in the ribosome. This is Elongation factor G, mitochondrial (mef1) from Penicillium rubens (strain ATCC 28089 / DSM 1075 / NRRL 1951 / Wisconsin 54-1255) (Penicillium chrysogenum).